Here is a 311-residue protein sequence, read N- to C-terminus: Replication initiation protein (311 aa).

It belongs to the plasmid replication initiation factor family.

Its function is as follows. This protein is probably a specific topoisomerase involved in initiating replication. This protein is specifically required and may be rate-limiting for replication of the plasmid in vivo. This chain is Replication initiation protein (repD), found in Staphylococcus aureus.